The sequence spans 317 residues: Olfactory receptor 10AD1 (317 aa).

Topologically, residues 1–25 (MLRNGSIVTEFILVGFQQSSTSTRA) are extracellular. N-linked (GlcNAc...) asparagine glycosylation occurs at Asn-4. A helical transmembrane segment spans residues 26–46 (LLFALFLALYSLTMAMNGLII). Residues 47 to 55 (FITSWTDPK) are Cytoplasmic-facing. Residues 56–76 (LNSPMYFFLGHLSLLDVCFIT) traverse the membrane as a helical segment. Over 77–100 (TTIPQMLIHLVVRDHIVSFVCCMT) the chain is Extracellular. An intrachain disulfide couples Cys-98 to Cys-190. A helical membrane pass occupies residues 101–121 (QMYFVFCVGVAECILLAFMAY). The Cytoplasmic portion of the chain corresponds to 122-140 (DRYVAICYPLNYVPIISQK). The helical transmembrane segment at 141–161 (VCVRLVGTAWFFGLINGIFLE) threads the bilayer. Residues 162–198 (YISFREPFRRDNHIESFFCEAPIVIGLSCGDPQFSLW) lie on the Extracellular side of the membrane. The helical transmembrane segment at 199–218 (AIFADAIVVILSPMVLTVTS) threads the bilayer. The Cytoplasmic portion of the chain corresponds to 219-238 (YVHILATILSKASSSGRGKT). The chain crosses the membrane as a helical span at residues 239-259 (FSTCASHLTVVIFLYTSAMFS). Over 260–272 (YMNPHSTHGPDKD) the chain is Extracellular. The chain crosses the membrane as a helical span at residues 273–293 (KPFSLLYTIITPMCNPIIYSF). Residues 294-317 (RNKEIKEAMVRALGRTRLAQPQSV) are Cytoplasmic-facing.

Belongs to the G-protein coupled receptor 1 family.

The protein resides in the cell membrane. Its function is as follows. Odorant receptor. The sequence is that of Olfactory receptor 10AD1 (OR10AD1) from Homo sapiens (Human).